Consider the following 1169-residue polypeptide: Integrin alpha-X (1169 aa).

The signal sequence occupies residues 1 to 19; the sequence is MSCTWIAFLLLLGFVSCLG. Residues 20–1116 lie on the Extracellular side of the membrane; it reads FNLDAEKLTH…EMYKVHNPVP (1097 aa). FG-GAP repeat units lie at residues 23 to 78 and 79 to 138; these read DAEK…NCEP and ISLQ…QSQN. Cys-69 and Cys-76 are oxidised to a cystine. An N-linked (GlcNAc...) asparagine glycan is attached at Asn-89. 2 disulfides stabilise this stretch: Cys-108–Cys-126 and Cys-116–Cys-146. One can recognise a VWFA domain in the interval 152–330; that stretch reads DIVFLIDGSG…DALKDIENQL (179 aa). Residues Asp-158, Ser-160, Ser-162, and Asp-260 each contribute to the Mg(2+) site. N-linked (GlcNAc...) asparagine glycosylation occurs at Asn-267. FG-GAP repeat units follow at residues 341–392, 393–444, 445–505, 508–566, and 571–631; these read ETPS…PTFI, NMSQ…SRHW, RPKS…GSRW, GTTL…QDIA, and QRIS…FTPA. Asn-393 is a glycosylation site (N-linked (GlcNAc...) asparagine). Ca(2+)-binding residues include Asp-467, Asp-469, Asp-471, and Asp-475. Cys-496 and Cys-507 are joined by a disulfide. Residues Asp-531, Asn-533, Asp-535, Asp-539, Asp-594, Asp-598, and Asp-602 each coordinate Ca(2+). Disulfide bonds link Cys-640/Cys-721 and Cys-656/Cys-711. Asn-734 is a glycosylation site (N-linked (GlcNAc...) asparagine). 2 cysteine pairs are disulfide-bonded: Cys-770–Cys-776 and Cys-858–Cys-873. Asn-949 carries an N-linked (GlcNAc...) asparagine glycan. Disulfide bonds link Cys-1007-Cys-1031 and Cys-1036-Cys-1041. N-linked (GlcNAc...) asparagine glycans are attached at residues Asn-1059 and Asn-1084. Residues 1117-1137 form a helical membrane-spanning segment; the sequence is LIVGSSVGGLLLLAIITAILY. Topologically, residues 1138–1169 are cytoplasmic; sequence KAGFFKRQYKEMLEEANGQFVSDGTPTPQVAQ. Residues 1140–1144 carry the GFFKR motif motif; that stretch reads GFFKR.

It belongs to the integrin alpha chain family. In terms of assembly, heterodimer of an alpha and a beta subunit. Alpha-X associates with beta-2.

It is found in the membrane. In terms of biological role, integrin alpha-X/beta-2 is a receptor for fibrinogen. It recognizes the sequence G-P-R in fibrinogen. It mediates cell-cell interaction during inflammatory responses. It is especially important in monocyte adhesion and chemotaxis. In Mus musculus (Mouse), this protein is Integrin alpha-X (Itgax).